Consider the following 141-residue polypeptide: Large ribosomal subunit protein uL11 (141 aa).

This sequence belongs to the universal ribosomal protein uL11 family. As to quaternary structure, part of the ribosomal stalk of the 50S ribosomal subunit. Interacts with L10 and the large rRNA to form the base of the stalk. L10 forms an elongated spine to which L12 dimers bind in a sequential fashion forming a multimeric L10(L12)X complex. In terms of processing, one or more lysine residues are methylated.

Functionally, forms part of the ribosomal stalk which helps the ribosome interact with GTP-bound translation factors. The polypeptide is Large ribosomal subunit protein uL11 (Streptococcus mutans serotype c (strain ATCC 700610 / UA159)).